Consider the following 397-residue polypeptide: Enoyl-[acyl-carrier-protein] reductase [NADH] (397 aa).

Residues 48-53 (GASTGY), 74-75 (FE), 111-112 (DA), and 139-140 (LA) each bind NAD(+). Residue tyrosine 225 coordinates substrate. Tyrosine 235 acts as the Proton donor in catalysis. NAD(+) is bound by residues lysine 244 and 273–275 (VVT).

This sequence belongs to the TER reductase family. In terms of assembly, monomer.

The catalysed reaction is a 2,3-saturated acyl-[ACP] + NAD(+) = a (2E)-enoyl-[ACP] + NADH + H(+). The protein operates within lipid metabolism; fatty acid biosynthesis. In terms of biological role, involved in the final reduction of the elongation cycle of fatty acid synthesis (FAS II). Catalyzes the reduction of a carbon-carbon double bond in an enoyl moiety that is covalently linked to an acyl carrier protein (ACP). This chain is Enoyl-[acyl-carrier-protein] reductase [NADH], found in Edwardsiella ictaluri (strain 93-146).